An 85-amino-acid chain; its full sequence is Defensin-like protein 112 (85 aa).

The first 24 residues, 1–24 (MAISKKMLTTFVLTILLAVSFVHC), serve as a signal peptide directing secretion. 4 disulfides stabilise this stretch: C40/C80, C46/C71, C56/C78, and C60/C79.

This sequence belongs to the DEFL family.

It is found in the secreted. In Arabidopsis thaliana (Mouse-ear cress), this protein is Defensin-like protein 112.